The sequence spans 189 residues: Probable nicotinate-nucleotide adenylyltransferase (189 aa).

It belongs to the NadD family.

It catalyses the reaction nicotinate beta-D-ribonucleotide + ATP + H(+) = deamido-NAD(+) + diphosphate. It participates in cofactor biosynthesis; NAD(+) biosynthesis; deamido-NAD(+) from nicotinate D-ribonucleotide: step 1/1. Its function is as follows. Catalyzes the reversible adenylation of nicotinate mononucleotide (NaMN) to nicotinic acid adenine dinucleotide (NaAD). The sequence is that of Probable nicotinate-nucleotide adenylyltransferase from Exiguobacterium sibiricum (strain DSM 17290 / CCUG 55495 / CIP 109462 / JCM 13490 / 255-15).